A 383-amino-acid chain; its full sequence is GTPase-interacting component 2 (383 aa).

The disordered stretch occupies residues 63 to 106; it reads SNKKNIELPPLSPNSHPSCHHRRSNSNSAKSKESSSSSSSANKT. The segment covering 87–105 has biased composition (low complexity); that stretch reads NSNSAKSKESSSSSSSANK. A CRIB domain is found at 134–147; sequence ISTPFDFQHISHAD. Residues 155–165 are compositionally biased toward polar residues; sequence EQLQEPSSLST. Residues 155–189 form a disordered region; sequence EQLQEPSSLSTEIKDDYTSSSSKRDSKSLNKAFVT. Residues 166–182 show a composition bias toward basic and acidic residues; it reads EIKDDYTSSSSKRDSKS. A phosphoserine mark is found at Ser254, Ser258, Ser337, Ser345, and Ser367. The segment at 319–361 is disordered; it reads ETPNSNKDSAKAFFPSRQSPLPKRRNSIATPSPQSKFSYSDSP. Residues 345 to 361 show a composition bias toward polar residues; the sequence is SIATPSPQSKFSYSDSP.

This sequence belongs to the BORG/CEP family. As to quaternary structure, interacts with GTP-bound CDC42.

It localises to the bud neck. The protein resides in the bud tip. It is found in the cytoplasm. The protein localises to the cell cortex. Its subcellular location is the cytoskeleton. In terms of biological role, required for cell size and shape control, bud site selection, bud emergence, actin cytoskeletal organization, mitotic spindle orientation/positioning, and mating projection formation in response to mating pheromone. This Saccharomyces cerevisiae (strain ATCC 204508 / S288c) (Baker's yeast) protein is GTPase-interacting component 2 (GIC2).